The chain runs to 78 residues: Conotoxin ArMKLT2-0312 (78 aa).

A signal peptide spans 1 to 22 (MKLTCVLIIAVLFLTACQLITA). Positions 23 to 45 (DYSRDKQEYRAVRLRDAMRYSRV) are excised as a propeptide. The residue at position 48 (glutamine 48) is a Pyrrolidone carboxylic acid. Disulfide bonds link cysteine 49–cysteine 62, cysteine 56–cysteine 67, and cysteine 61–cysteine 75.

Belongs to the conotoxin O1 superfamily. In terms of tissue distribution, expressed by the venom duct.

It localises to the secreted. The protein is Conotoxin ArMKLT2-0312 of Conus arenatus (Sand-dusted cone).